Consider the following 963-residue polypeptide: SH3 domain-binding protein 4 (963 aa).

In terms of domain architecture, SH3 1 spans 55–114 (GNAKEVIAIKDYCPTNFTTLKFSKGDHLYVLDTSGGEWWYAHNTTEMGYIPSSYVQPLNY). 5 positions are modified to phosphoserine: S131, S246, S251, S279, and S296. Residues 317–454 (TNIVCKLDSS…LEPCMYVAVV (138 aa)) form the ZU5 domain. Position 637 is a phosphoserine (S637). One can recognise an SH3 2 domain in the interval 654 to 724 (SSLKFGKLLK…HTKNVLVVGR (71 aa)).

In terms of assembly, homodimer or homooligomer. Interacts with DNM2, EPS15, clathrin, the adapter protein complex 2/AP-2 and TFRC. Interacts with the Rag GTPases RRAGA, RRAGB, RRAGC and RRAGD; the interaction is most probably direct, preferentially occurs with their inactive GDP-bound form and is negatively regulated by amino acids. (Microbial infection) Interacts with molluscum contagiosum virus protein MC159L; this interaction is important for the suppression of autophagy. Post-translationally, phosphorylated upon EGF stimulation. Phosphorylation prevents interaction with DNM2. In terms of tissue distribution, expressed in all tissues tested with higher expression in pancreas. Expressed by retinal pigment epithelial cells (at protein level).

Its subcellular location is the membrane. It localises to the clathrin-coated pit. The protein resides in the cytoplasmic vesicle. It is found in the clathrin-coated vesicle. The protein localises to the nucleus. Functionally, may function in transferrin receptor internalization at the plasma membrane through a cargo-specific control of clathrin-mediated endocytosis. Alternatively, may act as a negative regulator of the amino acid-induced TOR signaling by inhibiting the formation of active Rag GTPase complexes. Preferentially binds inactive Rag GTPase complexes and prevents their interaction with the mTORC1 complex inhibiting its relocalization to lysosomes and its activation. Thereby, may indirectly regulate cell growth, proliferation and autophagy. This Homo sapiens (Human) protein is SH3 domain-binding protein 4 (SH3BP4).